The following is a 507-amino-acid chain: Maturase K (507 aa).

Belongs to the intron maturase 2 family. MatK subfamily.

It is found in the plastid. The protein localises to the chloroplast. Usually encoded in the trnK tRNA gene intron. Probably assists in splicing its own and other chloroplast group II introns. This is Maturase K from Buxus microphylla (Littleleaf boxwood).